The sequence spans 154 residues: Jupiter microtubule associated homolog 1 (154 aa).

At Met-1 the chain carries N-acetylmethionine. The segment covering 1-19 (MTTTTTFKGVDPNSRNSSR) has biased composition (polar residues). The segment at 1-154 (MTTTTTFKGV…PGGKSSLVLG (154 aa)) is disordered. Residue Thr-2 is modified to N-acetylthreonine; in Hematological and neurological expressed 1 protein, N-terminally processed. Phosphoserine occurs at positions 28 and 31. Thr-54 carries the post-translational modification Phosphothreonine. Residues Ser-71, Ser-80, Ser-87, Ser-88, and Ser-92 each carry the phosphoserine modification. A compositionally biased stretch (polar residues) spans 80–91 (SGPQRRNSSEAN). Residues 96–108 (LDLKGEGDVHENV) show a composition bias toward basic and acidic residues. The span at 125–138 (PAAPVPSPVAPAPV) shows a compositional bias: pro residues. Ser-131 is modified (phosphoserine). N6-acetyllysine is present on Lys-148.

This sequence belongs to the JUPITER family. Interacts with the complex composed, at least, of APC, CTNNB1 and GSK3B; the interaction takes place with the inactive form of GSK3B (phosphorylated at 'Ser-9').

It localises to the nucleus. It is found in the cytoplasm. In terms of biological role, modulates negatively AKT-mediated GSK3B signaling. Induces CTNNB1 'Ser-33' phosphorylation and degradation through the suppression of the inhibitory 'Ser-9' phosphorylation of GSK3B, which represses the function of the APC:CTNNB1:GSK3B complex and the interaction with CDH1/E-cadherin in adherent junctions. Plays a role in the regulation of cell cycle and cell adhesion. Has an inhibitory role on AR-signaling pathway through the induction of receptor proteasomal degradation. The sequence is that of Jupiter microtubule associated homolog 1 from Bos taurus (Bovine).